Consider the following 230-residue polypeptide: Ribose-5-phosphate isomerase A (230 aa).

Substrate-binding positions include Thr-31–Thr-34, Asp-87–Asp-90, and Lys-100–Gly-103. The active-site Proton acceptor is the Glu-109. Position 127 (Lys-127) interacts with substrate.

Belongs to the ribose 5-phosphate isomerase family. As to quaternary structure, homodimer.

It carries out the reaction aldehydo-D-ribose 5-phosphate = D-ribulose 5-phosphate. Its pathway is carbohydrate degradation; pentose phosphate pathway; D-ribose 5-phosphate from D-ribulose 5-phosphate (non-oxidative stage): step 1/1. Functionally, catalyzes the reversible conversion of ribose-5-phosphate to ribulose 5-phosphate. The chain is Ribose-5-phosphate isomerase A from Lactobacillus delbrueckii subsp. bulgaricus (strain ATCC 11842 / DSM 20081 / BCRC 10696 / JCM 1002 / NBRC 13953 / NCIMB 11778 / NCTC 12712 / WDCM 00102 / Lb 14).